The primary structure comprises 519 residues: Protein amnionless (519 aa).

The first 19 residues, 1-19 (MGAPGRVLLWLQLCALTRA), serve as a signal peptide directing secretion. The Extracellular portion of the chain corresponds to 20 to 430 (AYKLWVPNTY…NAPGARSDLM (411 aa)). Asparagine 35 and asparagine 39 each carry an N-linked (GlcNAc...) asparagine glycan. 6 disulfide bridges follow: cysteine 43–cysteine 152, cysteine 193–cysteine 267, cysteine 259–cysteine 265, cysteine 277–cysteine 303, cysteine 288–cysteine 304, and cysteine 293–cysteine 307. Residues 67-143 (SDMEELQDRK…VLASGAGFSA (77 aa)) are interaction with CUBN. Positions 256-308 (PEACADPSGCVCGNAEVQPWICAALLQPLGGRCPQAACQDALRPEGQCCDLCG) constitute a VWFC domain. A helical transmembrane segment spans residues 431-451 (GGLVAALLLLLLVLLVAALLL). Residues 452–519 (RRAGRLRWSR…YGEAEAEAEA (68 aa)) are Cytoplasmic-facing.

As to quaternary structure, interacts (via extracellular region) with CUBN/cubilin, giving rise to a huge complex containing one AMN chain and three CUBN chains. Post-translationally, N-glycosylated. A soluble form arises by proteolytic removal of the membrane anchor. In terms of tissue distribution, detected in kidney cortex (at protein level).

It is found in the apical cell membrane. It localises to the cell membrane. The protein resides in the endosome membrane. The protein localises to the membrane. Its subcellular location is the coated pit. Membrane-bound component of the endocytic receptor formed by AMN and CUBN. Required for normal CUBN glycosylation and trafficking to the cell surface. The complex formed by AMN and CUBN is required for efficient absorption of vitamin B12. Required for normal CUBN-mediated protein transport in the kidney. In Sus scrofa (Pig), this protein is Protein amnionless (AMN).